We begin with the raw amino-acid sequence, 351 residues long: S-adenosylmethionine:tRNA ribosyltransferase-isomerase (351 aa).

Belongs to the QueA family. Monomer.

It localises to the cytoplasm. The enzyme catalyses 7-aminomethyl-7-carbaguanosine(34) in tRNA + S-adenosyl-L-methionine = epoxyqueuosine(34) in tRNA + adenine + L-methionine + 2 H(+). It functions in the pathway tRNA modification; tRNA-queuosine biosynthesis. Functionally, transfers and isomerizes the ribose moiety from AdoMet to the 7-aminomethyl group of 7-deazaguanine (preQ1-tRNA) to give epoxyqueuosine (oQ-tRNA). In Hahella chejuensis (strain KCTC 2396), this protein is S-adenosylmethionine:tRNA ribosyltransferase-isomerase.